The chain runs to 111 residues: Ribonuclease P protein component (111 aa).

Belongs to the RnpA family. Consists of a catalytic RNA component (M1 or rnpB) and a protein subunit.

The enzyme catalyses Endonucleolytic cleavage of RNA, removing 5'-extranucleotides from tRNA precursor.. Its function is as follows. RNaseP catalyzes the removal of the 5'-leader sequence from pre-tRNA to produce the mature 5'-terminus. It can also cleave other RNA substrates such as 4.5S RNA. The protein component plays an auxiliary but essential role in vivo by binding to the 5'-leader sequence and broadening the substrate specificity of the ribozyme. The sequence is that of Ribonuclease P protein component from Clostridium botulinum (strain Loch Maree / Type A3).